A 494-amino-acid polypeptide reads, in one-letter code: Subtilisin-like serine protease Pen ch 18.0101 (494 aa).

The first 16 residues, 1–16 (MKGFLSLTLLPLLVAA), serve as a signal peptide directing secretion. Residues 17–136 (SPVAVNSIHN…IEKDSEVRTM (120 aa)) constitute a propeptide, removed in mature form. Positions 43–136 (SYIVVFKKHV…IEKDSEVRTM (94 aa)) constitute an Inhibitor I9 domain. In terms of domain architecture, Peptidase S8 spans 146–448 (PWGLARISHR…GGSANYTKIL (303 aa)). IgE-binding regions lie at residues 180-198 (VIDTGANVKHVDFEGRANW) and 209-231 (EDGNGHGTHCSGTIAGKKFGVAK). Residues aspartate 182 and histidine 214 each act as charge relay system in the active site. N-linked (GlcNAc...) asparagine glycans are attached at residues asparagine 244 and asparagine 280. Catalysis depends on serine 376, which acts as the Charge relay system. An N-linked (GlcNAc...) asparagine glycan is attached at asparagine 443. Residues 454–494 (KAHNAETTVEDRIGIIIDSAEKAFHKELGAIYSEIKDAVSV) constitute a propeptide, removed in mature form.

The protein belongs to the peptidase S8 family.

Its function is as follows. Serine protease. This chain is Subtilisin-like serine protease Pen ch 18.0101, found in Penicillium rubens.